The following is a 121-amino-acid chain: Large ribosomal subunit protein uL14c (121 aa).

Component of the chloroplast large ribosomal subunit (LSU). Mature 70S chloroplast ribosomes of higher plants consist of a small (30S) and a large (50S) subunit. The 30S small subunit contains 1 molecule of ribosomal RNA (16S rRNA) and 24 different proteins. The 50S large subunit contains 3 rRNA molecules (23S, 5S and 4.5S rRNA) and 33 different proteins.

Its subcellular location is the plastid. The protein localises to the chloroplast. Component of the chloroplast ribosome (chloro-ribosome), a dedicated translation machinery responsible for the synthesis of chloroplast genome-encoded proteins, including proteins of the transcription and translation machinery and components of the photosynthetic apparatus. The sequence is that of Large ribosomal subunit protein uL14c from Spinacia oleracea (Spinach).